The following is a 314-amino-acid chain: Acetyl-coenzyme A carboxylase carboxyl transferase subunit alpha (314 aa).

Positions 32 to 289 (EIDMLEASLA…KRTFESHLSE (258 aa)) constitute a CoA carboxyltransferase C-terminal domain.

Belongs to the AccA family. In terms of assembly, acetyl-CoA carboxylase is a heterohexamer composed of biotin carboxyl carrier protein (AccB), biotin carboxylase (AccC) and two subunits each of ACCase subunit alpha (AccA) and ACCase subunit beta (AccD).

Its subcellular location is the cytoplasm. The enzyme catalyses N(6)-carboxybiotinyl-L-lysyl-[protein] + acetyl-CoA = N(6)-biotinyl-L-lysyl-[protein] + malonyl-CoA. It participates in lipid metabolism; malonyl-CoA biosynthesis; malonyl-CoA from acetyl-CoA: step 1/1. In terms of biological role, component of the acetyl coenzyme A carboxylase (ACC) complex. First, biotin carboxylase catalyzes the carboxylation of biotin on its carrier protein (BCCP) and then the CO(2) group is transferred by the carboxyltransferase to acetyl-CoA to form malonyl-CoA. This chain is Acetyl-coenzyme A carboxylase carboxyl transferase subunit alpha, found in Staphylococcus saprophyticus subsp. saprophyticus (strain ATCC 15305 / DSM 20229 / NCIMB 8711 / NCTC 7292 / S-41).